We begin with the raw amino-acid sequence, 499 residues long: Rhamnogalacturonan I rhamnosyltransferase 1 (499 aa).

A helical; Signal-anchor for type II membrane protein membrane pass occupies residues 31–50; that stretch reads WFVRVCSSILVWTCLVQLFA. N-linked (GlcNAc...) asparagine glycans are attached at residues asparagine 88, asparagine 121, and asparagine 207. 261–263 serves as a coordination point for substrate; the sequence is HLR. Residues asparagine 375, asparagine 435, and asparagine 496 are each glycosylated (N-linked (GlcNAc...) asparagine).

Belongs to the glycosyltransferase GT106 family.

It localises to the golgi apparatus membrane. The enzyme catalyses alpha-D-galacturonosyl-[(1-&gt;2)-alpha-L-rhamnosyl-(1-&gt;4)-alpha-D-galacturonosyl](n) + UDP-beta-L-rhamnose = [(1-&gt;2)-alpha-L-rhamnosyl-(1-&gt;4)-alpha-D-galacturonosyl](n+1) + UDP + H(+). It participates in glycan metabolism; pectin biosynthesis. In terms of biological role, glycosyltransferase involved in the formation of rhamnogalacturonan I (RG-I) oligosaccharides in the seed coat mucilage, which is a specialized cell wall with abundant RG-I. Transfers the rhamnose residue from UDP-beta-L-rhamnose to RG-I oligosaccharides. The sequence is that of Rhamnogalacturonan I rhamnosyltransferase 1 from Arabidopsis thaliana (Mouse-ear cress).